Consider the following 145-residue polypeptide: LIRP (145 aa).

The segment at residues 1–19 (MWKLCLRLLAVLAVCLSTA) is a signal peptide (or 22). 2 consecutive propeptides follow at residues 20–33 (TQAQ…SPKR) and 117–122 (FRRRTR). 3 disulfides stabilise this stretch: cysteine 44/cysteine 129, cysteine 56/cysteine 142, and cysteine 128/cysteine 133.

The protein belongs to the insulin family. As to quaternary structure, heterodimer of a B chain and an A chain linked by two disulfide bonds.

Its subcellular location is the secreted. In Locusta migratoria (Migratory locust), this protein is LIRP.